The primary structure comprises 259 residues: Thrombin-like enzyme gyroxin B1.7 (259 aa).

An N-terminal signal peptide occupies residues 1–18 (MVLIRVLANLLILQLSYA). Residues 19–259 (QKSSELVIGG…AGNTAVTCPP (241 aa)) constitute a propeptide that is removed on maturation. In terms of domain architecture, Peptidase S1 spans 25–250 (VIGGDECNIN…DTEWIQSIIA (226 aa)). 5 disulfide bridges follow: cysteine 31–cysteine 162, cysteine 49–cysteine 65, cysteine 141–cysteine 211, cysteine 173–cysteine 190, and cysteine 201–cysteine 226. Histidine 64 (charge relay system) is an active-site residue. Asparagine 102 is a glycosylation site (N-linked (GlcNAc...) asparagine). Aspartate 109 functions as the Charge relay system in the catalytic mechanism. The active-site Charge relay system is serine 205.

The protein belongs to the peptidase S1 family. Snake venom subfamily. Monomer. Expressed by the venom gland.

It is found in the secreted. Its function is as follows. Thrombin-like snake venom serine protease. Displays a specificity similar to trypsin. Releases only fibrinopeptide A in the conversion of fibrinogen to fibrin. Shows coagulant, esterase and amidase activities. Reversibly increases the permeability of the blood brain barrier (BBB) in mice. Induces the barrel rotation syndrome in mice, which is manifested by gyroxin-like, rapid rolling motions. This syndrome may be due to its effect on BBB permeability, and certainly also to other actions affecting endogenous substrates present in the endothelium, nervous tissues or blood. The polypeptide is Thrombin-like enzyme gyroxin B1.7 (Crotalus durissus terrificus (South American rattlesnake)).